The sequence spans 480 residues: Ribulose bisphosphate carboxylase large chain (480 aa).

Residues 1–2 (MS) constitute a propeptide that is removed on maturation. Pro-3 is subject to N-acetylproline. Lys-14 is modified (N6,N6,N6-trimethyllysine). Substrate-binding residues include Asn-123 and Thr-173. Lys-175 serves as the catalytic Proton acceptor. Lys-177 contributes to the substrate binding site. Residues Lys-201, Asp-203, and Glu-204 each contribute to the Mg(2+) site. Lys-201 is subject to N6-carboxylysine. The active-site Proton acceptor is the His-294. Substrate is bound by residues Arg-295, His-327, and Ser-379.

It belongs to the RuBisCO large chain family. Type I subfamily. In terms of assembly, heterohexadecamer of 8 large chains and 8 small chains; disulfide-linked. The disulfide link is formed within the large subunit homodimers. The cofactor is Mg(2+). In terms of processing, the disulfide bond which can form in the large chain dimeric partners within the hexadecamer appears to be associated with oxidative stress and protein turnover.

The protein resides in the plastid. It localises to the chloroplast. It carries out the reaction 2 (2R)-3-phosphoglycerate + 2 H(+) = D-ribulose 1,5-bisphosphate + CO2 + H2O. The catalysed reaction is D-ribulose 1,5-bisphosphate + O2 = 2-phosphoglycolate + (2R)-3-phosphoglycerate + 2 H(+). Its function is as follows. RuBisCO catalyzes two reactions: the carboxylation of D-ribulose 1,5-bisphosphate, the primary event in carbon dioxide fixation, as well as the oxidative fragmentation of the pentose substrate in the photorespiration process. Both reactions occur simultaneously and in competition at the same active site. This Alluaudia procera (Madagascan ocotillo) protein is Ribulose bisphosphate carboxylase large chain.